We begin with the raw amino-acid sequence, 223 residues long: Ribose-5-phosphate isomerase A (223 aa).

Substrate contacts are provided by residues 26–29 (TGST), 82–85 (DGAD), and 95–98 (KGGG). Catalysis depends on glutamate 104, which acts as the Proton acceptor. Residue lysine 122 participates in substrate binding.

Belongs to the ribose 5-phosphate isomerase family. As to quaternary structure, homodimer.

It carries out the reaction aldehydo-D-ribose 5-phosphate = D-ribulose 5-phosphate. Its pathway is carbohydrate degradation; pentose phosphate pathway; D-ribose 5-phosphate from D-ribulose 5-phosphate (non-oxidative stage): step 1/1. Its function is as follows. Catalyzes the reversible conversion of ribose-5-phosphate to ribulose 5-phosphate. This is Ribose-5-phosphate isomerase A from Streptococcus agalactiae serotype III (strain NEM316).